A 464-amino-acid chain; its full sequence is Siroheme synthase (464 aa).

The precorrin-2 dehydrogenase /sirohydrochlorin ferrochelatase stretch occupies residues 1–203; it reads MDYLPLFHNL…GQETEAERLL (203 aa). Residues 22–23 and 43–44 contribute to the NAD(+) site; these read EI and PQ. Position 128 is a phosphoserine (Ser-128). Residues 216 to 464 form a uroporphyrinogen-III C-methyltransferase region; that stretch reads GEVYLVGAGP…AWFEGRQSAD (249 aa). Pro-225 contributes to the S-adenosyl-L-methionine binding site. Asp-248 (proton acceptor) is an active-site residue. Catalysis depends on Lys-270, which acts as the Proton donor. Residues 301 to 303, Ile-306, 331 to 332, Met-383, and Gly-412 each bind S-adenosyl-L-methionine; these read GGD and TA.

In the N-terminal section; belongs to the precorrin-2 dehydrogenase / sirohydrochlorin ferrochelatase family. This sequence in the C-terminal section; belongs to the precorrin methyltransferase family.

It catalyses the reaction uroporphyrinogen III + 2 S-adenosyl-L-methionine = precorrin-2 + 2 S-adenosyl-L-homocysteine + H(+). The catalysed reaction is precorrin-2 + NAD(+) = sirohydrochlorin + NADH + 2 H(+). The enzyme catalyses siroheme + 2 H(+) = sirohydrochlorin + Fe(2+). Its pathway is cofactor biosynthesis; adenosylcobalamin biosynthesis; precorrin-2 from uroporphyrinogen III: step 1/1. The protein operates within cofactor biosynthesis; adenosylcobalamin biosynthesis; sirohydrochlorin from precorrin-2: step 1/1. It participates in porphyrin-containing compound metabolism; siroheme biosynthesis; precorrin-2 from uroporphyrinogen III: step 1/1. It functions in the pathway porphyrin-containing compound metabolism; siroheme biosynthesis; siroheme from sirohydrochlorin: step 1/1. Its pathway is porphyrin-containing compound metabolism; siroheme biosynthesis; sirohydrochlorin from precorrin-2: step 1/1. Its function is as follows. Multifunctional enzyme that catalyzes the SAM-dependent methylations of uroporphyrinogen III at position C-2 and C-7 to form precorrin-2 via precorrin-1. Then it catalyzes the NAD-dependent ring dehydrogenation of precorrin-2 to yield sirohydrochlorin. Finally, it catalyzes the ferrochelation of sirohydrochlorin to yield siroheme. The protein is Siroheme synthase of Azotobacter vinelandii (strain DJ / ATCC BAA-1303).